We begin with the raw amino-acid sequence, 356 residues long: Glutamine synthetase nodule isozyme (356 aa).

The 81-residue stretch at 19–99 (IIAEYIWIGG…VMCDAYTPAG (81 aa)) folds into the GS beta-grasp domain. The tract at residues 41 to 66 (PGPVSDPSKLPKWNYDGSSTGQAPGE) is disordered. One can recognise a GS catalytic domain in the interval 106–356 (KRHNAAKIFS…IADTTILWKP (251 aa)).

The protein belongs to the glutamine synthetase family. Homooctamer.

The protein localises to the cytoplasm. It carries out the reaction L-glutamate + NH4(+) + ATP = L-glutamine + ADP + phosphate + H(+). The polypeptide is Glutamine synthetase nodule isozyme (Vigna aconitifolia (Moth bean)).